A 108-amino-acid chain; its full sequence is uncharacterized protein (108 aa).

An HTH cro/C1-type domain is found at 20–74; it reads VRQRRTALILDQETLARRIGVSFQQIQKYERGRNRISASRLYDIAKALAVPIDYF. A DNA-binding region (H-T-H motif) is located at residues 31–50; that stretch reads QETLARRIGVSFQQIQKYER.

This is an uncharacterized protein from Rhodospirillum rubrum.